The following is a 135-amino-acid chain: Small ribosomal subunit protein bS6 (135 aa).

Polar residues predominate over residues 99–120 (QHSSLGRSTAPANPMASNTPRT). The segment at 99 to 135 (QHSSLGRSTAPANPMASNTPRTEGQEQAKTEPQTAPA) is disordered.

The protein belongs to the bacterial ribosomal protein bS6 family.

Binds together with bS18 to 16S ribosomal RNA. This is Small ribosomal subunit protein bS6 from Synechococcus sp. (strain RCC307).